The primary structure comprises 883 residues: Bifunctional heparan sulfate N-deacetylase/N-sulfotransferase 2 (883 aa).

At 1–18 the chain is on the cytoplasmic side; it reads MLQLWKVVRPARQLELHR. A helical; Signal-anchor for type II membrane protein transmembrane segment spans residues 19-39; sequence LILLLIGFSLVSMGFLAYYVS. At 40–883 the chain is on the lumenal side; it reads TSPKAKEPLP…REELQHSSVG (844 aa). The segment at 41–597 is heparan sulfate N-deacetylase 2; sequence SPKAKEPLPL…KRHKDIWSKE (557 aa). Residues 49–82 are disordered; sequence PLPLGDCSSSGAAGPGPARPPVPPRPQRPPETTR. The span at 65 to 77 shows a compositional bias: pro residues; that stretch reads PARPPVPPRPQRP. N233, N350, and N400 each carry an N-linked (GlcNAc...) asparagine glycan. The tract at residues 598 to 883 is heparan sulfate N-sulfotransferase 2; it reads KTCDRLPKFL…REELQHSSVG (286 aa). The active-site For sulfotransferase activity is the K613. 613-617 provides a ligand contact to 3'-phosphoadenylyl sulfate; the sequence is KTGTT. N666 is a glycosylation site (N-linked (GlcNAc...) asparagine). A 3'-phosphoadenylyl sulfate-binding site is contributed by S711. N-linked (GlcNAc...) asparagine glycosylation is found at N726 and N802. C817 and C827 are disulfide-bonded. Residue 832–836 coordinates 3'-phosphoadenylyl sulfate; it reads KGRRY.

Belongs to the sulfotransferase 1 family. NDST subfamily. Monomer. In terms of tissue distribution, widely expressed in adult and throughout development.

Its subcellular location is the golgi apparatus membrane. The enzyme catalyses alpha-D-glucosaminyl-[heparan sulfate](n) + 3'-phosphoadenylyl sulfate = N-sulfo-alpha-D-glucosaminyl-[heparan sulfate](n) + adenosine 3',5'-bisphosphate + 2 H(+). Its pathway is glycan metabolism; heparan sulfate biosynthesis. It participates in glycan metabolism; heparin biosynthesis. Essential bifunctional enzyme that catalyzes both the N-deacetylation and the N-sulfation of glucosamine (GlcNAc) of the glycosaminoglycan in heparan sulfate. Modifies the GlcNAc-GlcA disaccharide repeating sugar backbone to make N-sulfated heparosan, a prerequisite substrate for later modifications in heparin biosynthesis. Plays a role in determining the extent and pattern of sulfation of heparan sulfate. Required for the exosomal release of SDCBP, CD63 and syndecan. The sequence is that of Bifunctional heparan sulfate N-deacetylase/N-sulfotransferase 2 (Ndst2) from Mus musculus (Mouse).